Consider the following 532-residue polypeptide: Apolipoprotein N-acyltransferase (532 aa).

Helical transmembrane passes span 37-57 (IFVA…GAIA), 75-95 (WWFG…ALLV), 106-126 (LAVL…AMIA), 128-148 (LLWS…ALAE), 179-199 (VIGL…PALL), and 207-227 (TGIG…AWTL). In terms of domain architecture, CN hydrolase spans 245–494 (VQPSIAQAMK…VGVVDSYLPS (250 aa)). The Proton acceptor role is filled by E289. The active site involves K353. The Nucleophile role is filled by C406. The helical transmembrane segment at 505-525 (GWIQTVLILLTLLAASVGLIL) threads the bilayer.

Belongs to the CN hydrolase family. Apolipoprotein N-acyltransferase subfamily.

It localises to the cell inner membrane. It carries out the reaction N-terminal S-1,2-diacyl-sn-glyceryl-L-cysteinyl-[lipoprotein] + a glycerophospholipid = N-acyl-S-1,2-diacyl-sn-glyceryl-L-cysteinyl-[lipoprotein] + a 2-acyl-sn-glycero-3-phospholipid + H(+). The protein operates within protein modification; lipoprotein biosynthesis (N-acyl transfer). Functionally, catalyzes the phospholipid dependent N-acylation of the N-terminal cysteine of apolipoprotein, the last step in lipoprotein maturation. The chain is Apolipoprotein N-acyltransferase from Brucella suis biovar 1 (strain 1330).